Here is a 398-residue protein sequence, read N- to C-terminus: Acetate kinase (398 aa).

Mg(2+) is bound at residue Asn8. Residue Lys15 coordinates ATP. Substrate is bound at residue Arg89. The active-site Proton donor/acceptor is the Asp146. ATP is bound by residues 206–210, 283–285, and 331–335; these read HIGNG, DMR, and GMGEN. Position 383 (Glu383) interacts with Mg(2+).

Belongs to the acetokinase family. As to quaternary structure, homodimer. The cofactor is Mg(2+). It depends on Mn(2+) as a cofactor.

The protein resides in the cytoplasm. It catalyses the reaction acetate + ATP = acetyl phosphate + ADP. Its pathway is metabolic intermediate biosynthesis; acetyl-CoA biosynthesis; acetyl-CoA from acetate: step 1/2. In terms of biological role, catalyzes the formation of acetyl phosphate from acetate and ATP. Can also catalyze the reverse reaction. The chain is Acetate kinase from Streptococcus pyogenes serotype M12 (strain MGAS2096).